The sequence spans 270 residues: Formamidopyrimidine-DNA glycosylase (270 aa).

Pro2 acts as the Schiff-base intermediate with DNA in catalysis. Glu3 functions as the Proton donor in the catalytic mechanism. Lys58 serves as the catalytic Proton donor; for beta-elimination activity. Positions 91, 110, and 151 each coordinate DNA. The FPG-type zinc-finger motif lies at 236-270 (FVYGRGGEFCKVCGSTLREIRLGQRASVYCPRCQR). The Proton donor; for delta-elimination activity role is filled by Arg260.

It belongs to the FPG family. Monomer. Zn(2+) is required as a cofactor.

It catalyses the reaction Hydrolysis of DNA containing ring-opened 7-methylguanine residues, releasing 2,6-diamino-4-hydroxy-5-(N-methyl)formamidopyrimidine.. It carries out the reaction 2'-deoxyribonucleotide-(2'-deoxyribose 5'-phosphate)-2'-deoxyribonucleotide-DNA = a 3'-end 2'-deoxyribonucleotide-(2,3-dehydro-2,3-deoxyribose 5'-phosphate)-DNA + a 5'-end 5'-phospho-2'-deoxyribonucleoside-DNA + H(+). In terms of biological role, involved in base excision repair of DNA damaged by oxidation or by mutagenic agents. Acts as a DNA glycosylase that recognizes and removes damaged bases. Has a preference for oxidized purines, such as 7,8-dihydro-8-oxoguanine (8-oxoG). Has AP (apurinic/apyrimidinic) lyase activity and introduces nicks in the DNA strand. Cleaves the DNA backbone by beta-delta elimination to generate a single-strand break at the site of the removed base with both 3'- and 5'-phosphates. This is Formamidopyrimidine-DNA glycosylase from Pseudomonas aeruginosa (strain LESB58).